A 140-amino-acid polypeptide reads, in one-letter code: Phosphatidylinositol N-acetylglucosaminyltransferase subunit GPI19 (140 aa).

The Cytoplasmic segment spans residues 1–12 (MYTKEYYWFSQY). The helical transmembrane segment at 13-33 (MIITSTLVLTIIWSILPSSLG) threads the bilayer. The Lumenal portion of the chain corresponds to 34–52 (EAAPKQFINTLLDIFPQRR). The chain crosses the membrane as a helical span at residues 53 to 73 (WIITLESIMLMGMLCTYIGLL). Topologically, residues 74 to 140 (MYNEDTLTPP…YLYDNDHTST (67 aa)) are cytoplasmic.

Belongs to the GPI19 family. As to quaternary structure, component of the phosphatidylinositol N-acetylglucosaminyltransferase (GPI-GlcNAc transferase) complex composed of at least GPI1, GPI2, GPI3, GPI15, GPI19 and ERI1. Interacts with GPI2.

Its subcellular location is the endoplasmic reticulum membrane. The enzyme catalyses a 1,2-diacyl-sn-glycero-3-phospho-(1D-myo-inositol) + UDP-N-acetyl-alpha-D-glucosamine = a 6-(N-acetyl-alpha-D-glucosaminyl)-1-(1,2-diacyl-sn-glycero-3-phospho)-1D-myo-inositol + UDP + H(+). The protein operates within glycolipid biosynthesis; glycosylphosphatidylinositol-anchor biosynthesis. Part of the complex catalyzing the transfer of N-acetylglucosamine from UDP-N-acetylglucosamine to phosphatidylinositol, the first step of GPI biosynthesis. Involved in cell wall biosynthesis. The sequence is that of Phosphatidylinositol N-acetylglucosaminyltransferase subunit GPI19 (GPI19) from Saccharomyces cerevisiae (strain ATCC 204508 / S288c) (Baker's yeast).